The sequence spans 717 residues: Fatty acid oxidation complex subunit alpha (717 aa).

An enoyl-CoA hydratase/isomerase region spans residues 1–190; the sequence is MIHAGNAITV…KDGAVDAVVA (190 aa). Aspartate 298 serves as a coordination point for substrate. The segment at 313–717 is 3-hydroxyacyl-CoA dehydrogenase; sequence HPVNQAAVLG…MAANNKKFYG (405 aa). NAD(+) is bound by residues methionine 326, aspartate 345, 402–404, lysine 409, and serine 431; that span reads VTE. The active-site For 3-hydroxyacyl-CoA dehydrogenase activity is the histidine 452. Asparagine 455 is a binding site for NAD(+). Position 502 (asparagine 502) interacts with substrate.

It in the N-terminal section; belongs to the enoyl-CoA hydratase/isomerase family. In the C-terminal section; belongs to the 3-hydroxyacyl-CoA dehydrogenase family. As to quaternary structure, heterotetramer of two alpha chains (FadB) and two beta chains (FadA).

It carries out the reaction a (3S)-3-hydroxyacyl-CoA + NAD(+) = a 3-oxoacyl-CoA + NADH + H(+). The enzyme catalyses a (3S)-3-hydroxyacyl-CoA = a (2E)-enoyl-CoA + H2O. The catalysed reaction is a 4-saturated-(3S)-3-hydroxyacyl-CoA = a (3E)-enoyl-CoA + H2O. It catalyses the reaction (3S)-3-hydroxybutanoyl-CoA = (3R)-3-hydroxybutanoyl-CoA. It carries out the reaction a (3Z)-enoyl-CoA = a 4-saturated (2E)-enoyl-CoA. The enzyme catalyses a (3E)-enoyl-CoA = a 4-saturated (2E)-enoyl-CoA. Its pathway is lipid metabolism; fatty acid beta-oxidation. Functionally, involved in the aerobic and anaerobic degradation of long-chain fatty acids via beta-oxidation cycle. Catalyzes the formation of 3-oxoacyl-CoA from enoyl-CoA via L-3-hydroxyacyl-CoA. It can also use D-3-hydroxyacyl-CoA and cis-3-enoyl-CoA as substrate. This is Fatty acid oxidation complex subunit alpha from Acinetobacter baumannii (strain SDF).